We begin with the raw amino-acid sequence, 372 residues long: Citrate synthase 2 (372 aa).

The active site involves H257. A Phosphoserine modification is found at S284. D308 is a catalytic residue.

This sequence belongs to the citrate synthase family. As to quaternary structure, homodimer.

It carries out the reaction oxaloacetate + acetyl-CoA + H2O = citrate + CoA + H(+). It functions in the pathway carbohydrate metabolism; tricarboxylic acid cycle; isocitrate from oxaloacetate: step 1/2. In terms of biological role, might regulate the synthesis and function of enzymes involved in later enzymatic steps of Krebs cycle. Loss in activity results in sporulation defect. The chain is Citrate synthase 2 (citZ) from Bacillus subtilis (strain 168).